Here is a 265-residue protein sequence, read N- to C-terminus: Exosome complex component Rrp4 (265 aa).

The S1 motif domain occupies 65–137 (GDNVIGKIVD…EVNNIDLTTK (73 aa)). The KH domain maps to 147–205 (KGGQIVKITPSRVPRVIGRGGSMINMIKKLTMTRIIVGQNGWIWVNGKNEALEKLAIEA). Acidic residues predominate over residues 241-254 (EIPELEEEPQEETE). A disordered region spans residues 241-265 (EIPELEEEPQEETEVNNNDGETRRT).

Belongs to the RRP4 family. Component of the archaeal exosome complex. Forms a trimer of Rrp4 and/or Csl4 subunits. The trimer associates with a hexameric ring-like arrangement composed of 3 Rrp41-Rrp42 heterodimers.

The protein localises to the cytoplasm. Functionally, non-catalytic component of the exosome, which is a complex involved in RNA degradation. Increases the RNA binding and the efficiency of RNA degradation. Confers strong poly(A) specificity to the exosome. The protein is Exosome complex component Rrp4 of Pyrococcus horikoshii (strain ATCC 700860 / DSM 12428 / JCM 9974 / NBRC 100139 / OT-3).